Here is a 245-residue protein sequence, read N- to C-terminus: MASLSKPSLPSYLCFLLLLLHVSSSYGGQFRVIGPSHPIQALVGDAAELPCRISPGKNATGMEVGWYRSPFSRVVHLYRNGKDQDGEQAPEYRGRTELLKDDIGEGKVTLKIRNVRFPDEGGFTCFFRDHSYQEEAAMQLKVEDPFYWVSPGVLVLLAVLPVLFLQITVGLVFLYLQHRLRGKLRAEIENLHRTFDPHFLRVPCWKITLFVIVPVLGPLVALIICYNWLHRRLAGQFLEELRNPF.

The signal sequence occupies residues 1-27 (MASLSKPSLPSYLCFLLLLLHVSSSYG). The Extracellular segment spans residues 28 to 152 (GQFRVIGPSH…EDPFYWVSPG (125 aa)). Residues 29 to 143 (QFRVIGPSHP…EEAAMQLKVE (115 aa)) form the Ig-like V-type domain. Residues cysteine 51 and cysteine 125 are joined by a disulfide bond. Asparagine 58 carries an N-linked (GlcNAc...) asparagine glycan. Residues 153 to 173 (VLVLLAVLPVLFLQITVGLVF) form a helical membrane-spanning segment. Over 174 to 208 (LYLQHRLRGKLRAEIENLHRTFDPHFLRVPCWKIT) the chain is Cytoplasmic. Residues 209–229 (LFVIVPVLGPLVALIICYNWL) traverse the membrane as a helical segment. Over 230 to 245 (HRRLAGQFLEELRNPF) the chain is Extracellular.

The protein belongs to the immunoglobulin superfamily. BTN/MOG family. Homodimer.

The protein resides in the membrane. Its function is as follows. Minor component of the myelin sheath. May be involved in completion and/or maintenance of the myelin sheath and in cell-cell communication. Mediates homophilic cell-cell adhesion. This Callithrix jacchus (White-tufted-ear marmoset) protein is Myelin-oligodendrocyte glycoprotein (MOG).